Consider the following 597-residue polypeptide: Gamma-terpinene synthase, chloroplastic (597 aa).

Residues 1-47 (MATLSMQVSILSKQVKNLNSFGMRASKLPMVARRVDVSTTRLRPICS) constitute a chloroplast transit peptide. Mn(2+) contacts are provided by D350 and D354. Positions 350-354 (DDVYD) match the DDXXD motif motif. Homodimerization regions lie at residues 356–362 (YGTLDEL) and 428–465 (EAKW…FTLP). Positions 494 and 502 each coordinate Mn(2+).

The protein belongs to the terpene synthase family. In terms of assembly, homodimer. It depends on Mn(2+) as a cofactor. Mg(2+) is required as a cofactor.

It localises to the plastid. Its subcellular location is the chloroplast. It carries out the reaction (2E)-geranyl diphosphate = gamma-terpinene + diphosphate. It functions in the pathway secondary metabolite biosynthesis; terpenoid biosynthesis. Its function is as follows. Involved in the biosynthesis of phenolic monoterpenes natural products thymol and carvacrol which have a broad range of biological activities acting as antimicrobial compounds, insecticides, antioxidants and pharmaceutical agents. Monoterpene synthase which catalyzes the conversion of geranyl diphosphate (GPP) to gamma-terpinene and minor amounts of other monoterpenes (e.g. alpha-thujene, alpha-terpinene, myrcene, sabinene, (+)-R-limonene, alpha-pinene and alpha-phellandrene). This Thymus caespititius (Cretan thyme) protein is Gamma-terpinene synthase, chloroplastic.